A 196-amino-acid chain; its full sequence is Large ribosomal subunit protein bL25 (196 aa).

Belongs to the bacterial ribosomal protein bL25 family. CTC subfamily. As to quaternary structure, part of the 50S ribosomal subunit; part of the 5S rRNA/L5/L18/L25 subcomplex. Contacts the 5S rRNA. Binds to the 5S rRNA independently of L5 and L18.

Its function is as follows. This is one of the proteins that binds to the 5S RNA in the ribosome where it forms part of the central protuberance. This chain is Large ribosomal subunit protein bL25, found in Amoebophilus asiaticus (strain 5a2).